The following is a 256-amino-acid chain: Nuclear shuttle protein (256 aa).

The Bipartite nuclear localization signal signature appears at 21–42; it reads HSTGKRSRNVSRIDFKRRSSKY. The Nuclear localization signal motif lies at 81-96; it reads SLGKTEPSRSRSYIKL. Positions 150-187 are interaction with Arabidopsis thaliana NSI protein; the sequence is ELFGARIHSHGNLAVSSALKDRFYIRHVFKRVISVEKD.

The protein belongs to the begomovirus nuclear shuttle protein family. In terms of assembly, binds to single-stranded and double-stranded viral DNA. Interacts with the host nuclear shuttle interacting (NSI) protein. This interaction may allow NSP to recruit NSI monomers to the viral genome and thus regulate nuclear export of viral genome by NSP.

Its subcellular location is the host nucleus. It localises to the host cytoplasm. It is found in the host cell membrane. Its function is as follows. Binds to the genomic viral ssDNA, shuttles it into and out of the cell nucleus. Begomoviruses use 2 proteins to transport their DNA from cell to cell. The nuclear shuttle protein (NSP) shuttles it between nucleus and cytoplasm and the movement protein (MP) probably transports the DNA-NSP complex to the cell periphery and facilitates movement across the cell wall. The polypeptide is Nuclear shuttle protein (Solanum lycopersicum (Tomato)).